A 117-amino-acid polypeptide reads, in one-letter code: Large ribosomal subunit protein bL19 (117 aa).

The protein belongs to the bacterial ribosomal protein bL19 family.

In terms of biological role, this protein is located at the 30S-50S ribosomal subunit interface and may play a role in the structure and function of the aminoacyl-tRNA binding site. This chain is Large ribosomal subunit protein bL19, found in Christiangramia forsetii (strain DSM 17595 / CGMCC 1.15422 / KT0803) (Gramella forsetii).